Reading from the N-terminus, the 389-residue chain is Naringenin-chalcone synthase (389 aa).

Cysteine 164 is a catalytic residue.

This sequence belongs to the thiolase-like superfamily. Chalcone/stilbene synthases family. As to expression, expressed in glandular trichomes. Detected at low levels in female flowers, stems, seeds, leaves and roots.

It is found in the cytoplasm. The catalysed reaction is (E)-4-coumaroyl-CoA + 3 malonyl-CoA + 3 H(+) = 2',4,4',6'-tetrahydroxychalcone + 3 CO2 + 4 CoA. In terms of biological role, chalcone synthase that can also use isovaleryl-CoA, isobutyryl-CoA or hexanoyl-CoA as substrates, but that is unable to produce olivetol or olivetolic acid. This Cannabis sativa (Hemp) protein is Naringenin-chalcone synthase (CHS).